Consider the following 207-residue polypeptide: BON1-associated protein 2 (207 aa).

Residues 1 to 112 enclose the C2 domain; the sequence is MSYSTFKRSL…GFAPQGHLNF (112 aa).

As to quaternary structure, interacts with BON1, BON2 and BON3. Expressed in roots, leaves, stems and flowers.

It is found in the membrane. Its function is as follows. Negative regulator of cell death and defense responses. Exhibits calcium-dependent phospholipid binding properties. In Arabidopsis thaliana (Mouse-ear cress), this protein is BON1-associated protein 2 (BAP2).